A 542-amino-acid chain; its full sequence is Plasminogen-binding protein PgbB (542 aa).

Residues 399–542 form a disordered region; the sequence is KSASKKSQKG…RRKALEMNKK (144 aa). Composition is skewed to basic and acidic residues over residues 418–435 and 447–456; these read QERHKAKENKQPLEENKV and VKTRRPEPIR. Over residues 457 to 467 the composition is skewed to polar residues; it reads DQNNATQQGET. The span at 481–542 shows a compositional bias: basic and acidic residues; it reads NAAKKEVPKP…RRKALEMNKK (62 aa).

Its subcellular location is the cell surface. Its function is as follows. Binds plasminogen, specifically, and in a concentration and lysine-dependent manner. Plasminogen is the precursor of plasmin, a serine protease that cleaves fibrin, fibronectin, laminin and vitronectin. Acquisition of plasminogen/plasmin could enable H.pylori to degrade host components. This Helicobacter pylori (strain ATCC 700392 / 26695) (Campylobacter pylori) protein is Plasminogen-binding protein PgbB (pgbB).